The following is a 517-amino-acid chain: Benzoate 4-monooxygenase bphA (517 aa).

A helical transmembrane segment spans residues 4 to 24 (LLLSPYGAYLGLALLVLYYLL). N-linked (GlcNAc...) asparagine glycosylation is found at Asn282 and Asn325. Cys461 provides a ligand contact to heme.

This sequence belongs to the cytochrome P450 family. The cofactor is heme.

The protein resides in the membrane. It catalyses the reaction benzoate + reduced [NADPH--hemoprotein reductase] + O2 = 4-hydroxybenzoate + oxidized [NADPH--hemoprotein reductase] + H2O + H(+). Functionally, cytochrome P450 monooxygenase; part of the benzoic acid degradation pathway also known as the protocatechuic acid pathway. Benzoic acid debradation begins with the conversion of benzoic acid into 4-hydroxybenzoic acid through hydroxylation by the benzoate-4-monooxygenase bphA, and its partner NADPH-cytochrome P450 reductase cprA which act as a mediator in electron donation from NADPH. 4-Hydroxybenzoic acid is then converted into 3,4-dihydroxybenzoic acid (also called protocatechuic acid) by the p-hydroxybenzoate-m-hydroxylase phhA. Protocatechuic acid is converted into 3-carboxy-cis,cis-muconic acid by the intradiol ring-cleavage dioxygenase prcA, which is further metabolized through the 3-oxoadipate pathway to finally enter the tricarboxylic acid cycle (TCA). Responsible for cytochrome P450 dependent benzoate hydroxylation in microsomes; requires cprA as the mediator in electron donation from NADPH. The chain is Benzoate 4-monooxygenase bphA from Aspergillus niger.